The primary structure comprises 151 residues: UPF0178 protein PFL_5989 (151 aa).

It belongs to the UPF0178 family.

The polypeptide is UPF0178 protein PFL_5989 (Pseudomonas fluorescens (strain ATCC BAA-477 / NRRL B-23932 / Pf-5)).